The following is an 880-amino-acid chain: Valine--tRNA ligase (880 aa).

The 'HIGH' region motif lies at 49–59 (PNVTGRLHLGH). Positions 525–529 (KMSKS) match the 'KMSKS' region motif. Residue K528 participates in ATP binding. Residues 809–879 (LEGLINIDEE…AVQKRMAELK (71 aa)) are a coiled coil.

The protein belongs to the class-I aminoacyl-tRNA synthetase family. ValS type 1 subfamily. As to quaternary structure, monomer.

The protein localises to the cytoplasm. It catalyses the reaction tRNA(Val) + L-valine + ATP = L-valyl-tRNA(Val) + AMP + diphosphate. Functionally, as ValRS can inadvertently accommodate and process structurally similar amino acids such as threonine, to avoid such errors, it has a 'posttransfer' editing activity that hydrolyzes mischarged Thr-tRNA(Val) in a tRNA-dependent manner. Catalyzes the attachment of valine to tRNA(Val). In Bacillus subtilis (strain 168), this protein is Valine--tRNA ligase.